Reading from the N-terminus, the 926-residue chain is Tyrosine-protein phosphatase non-receptor type 4 (926 aa).

One can recognise an FERM domain in the interval 29–312 (VVCNILLLDN…EHHTFFRLDR (284 aa)). 3 disordered regions span residues 379-412 (SDDRLETQSLPSRSPPGTPNHRNSSFTQEATRVR), 429-474 (SEDF…KKNS), and 492-511 (NESFDVPSSPEKSTPNGGIP). Composition is skewed to polar residues over residues 398-408 (NHRNSSFTQEA) and 432-455 (FVSQRSPSSTQANSIVLESSPSQE). A Phosphoserine modification is found at Ser-474. The PDZ domain maps to 517-589 (LIKMKPDENG…DQVVLFIKAS (73 aa)). A Tyrosine-protein phosphatase domain is found at 655–911 (VLAQFDQLYR…RFVCEAILKV (257 aa)). Substrate contacts are provided by residues Asp-820, 852 to 858 (CSAGIGR), and Gln-896. Cys-852 (phosphocysteine intermediate) is an active-site residue.

Belongs to the protein-tyrosine phosphatase family. Non-receptor class subfamily. In terms of tissue distribution, highly expressed in testis. Specifically expressed in spermatocytes and spermatids within seminiferous tubules (at protein level).

It is found in the cell membrane. Its subcellular location is the cytoplasm. It localises to the cytoskeleton. It catalyses the reaction O-phospho-L-tyrosyl-[protein] + H2O = L-tyrosyl-[protein] + phosphate. Phosphatase that plays a role in immunity, learning, synaptic plasticity or cell homeostasis. Regulates neuronal cell homeostasis by protecting neurons against apoptosis. Negatively regulates TLR4-induced interferon beta production by dephosphorylating adapter TICAM2 and inhibiting subsequent TRAM-TRIF interaction. Dephosphorylates also the immunoreceptor tyrosine-based activation motifs/ITAMs of the TCR zeta subunit and thereby negatively regulates TCR-mediated signaling pathway. May act at junctions between the membrane and the cytoskeleton. The sequence is that of Tyrosine-protein phosphatase non-receptor type 4 (Ptpn4) from Mus musculus (Mouse).